The following is a 624-amino-acid chain: Kelch-like ECH-associated protein 1 (624 aa).

Cys38 is subject to S-(2-succinyl)cysteine. Residues 77–149 enclose the BTB domain; the sequence is CDVTLQVKYQ…AYTASISMGE (73 aa). Arg135 participates in a covalent cross-link: N5-[4-(S-L-cysteinyl)-5-methyl-1H-imidazol-2-yl]-L-ornithine (Arg-Cys) (interchain with C-151 in KEAP1). Cys151 is modified (S-(2,3-dicarboxypropyl)cysteine; alternate). Position 151 is an S-(2-succinyl)cysteine; alternate (Cys151). Cys151 is modified (S-nitrosocysteine; alternate). Cys151 is covalently cross-linked (N5-[4-(S-L-cysteinyl)-5-methyl-1H-imidazol-2-yl]-L-ornithine (Cys-Arg) (interchain with R-135 in KEAP1)). A BACK domain is found at 184–286; that stretch reads AIGIANFAEQ…TPNFLQMQLQ (103 aa). Cys241 is modified (S-(2-succinyl)cysteine). S-(2,3-dicarboxypropyl)cysteine is present on residues Cys257 and Cys273. S-(2,3-dicarboxypropyl)cysteine; alternate is present on Cys288. Cys288 carries the post-translational modification S-(2-succinyl)cysteine; alternate. The residue at position 319 (Cys319) is an S-(2-succinyl)cysteine. Kelch repeat units follow at residues 327–372, 373–423, 424–470, 471–517, 518–564, and 565–611; these read LIYT…VVGG, LLYA…VIDG, HIYA…VLNR, LLYA…VLHN, CIYA…VHQG, and RIYV…VTME. Cys434 bears the S-cGMP-cysteine mark. Cys613 bears the S-(2-succinyl)cysteine mark.

The protein belongs to the KEAP1 family. In terms of assembly, component of the BCR(KEAP1) E3 ubiquitin ligase complex, at least composed of 2 molecules of CUL3, 2 molecules of KEAP1, and RBX1. Interacts with NFE2L2/NRF2; the interaction is direct. Forms a ternary complex with NFE2L2/NRF2 and PGAM5. Interacts with (phosphorylated) SQSTM1/p62; the interaction is direct and inactivates the BCR(KEAP1) complex by sequestering it in inclusion bodies, promoting its degradation. Interacts with NFE2L1. Interacts with BPTF and PTMA. Interacts with MAP1LC3B. Interacts indirectly with ENC1. Interacts with SESN1 and SESN2. Interacts with HSP90AA1 and HSP90AB1. Interacts with PGCKA1; this interaction prevents the ubiquitination of KEAP1 by TRIM25, thus protecting KEAP1 from degradation. (Microbial infection) Interacts with ebolavirus protein VP24; this interaction activates transcription factor NFE2L2/NRF2 by blocking its interaction with KEAP1. Post-translationally, non-enzymatic covalent modifications of reactive cysteines by electrophile metabolites inactivate the BCR(KEAP1) complex. Accumulation of fumarate promotes the formation of cysteine S-succination (S-(2-succinyl)cysteine), leading to inactivate the BCR(KEAP1) complex and promote NFE2L2/NRF2 nuclear accumulation and activation. Nitric oxide-dependent 8-Nitro-cGMP formation promotes cysteine guanylation (S-cGMP-cysteine), leading to NFE2L2/NRF2 nuclear accumulation and activation. Itaconate, an anti-inflammatory metabolite generated in response to lipopolysaccharide, alkylates cysteines, activating NFE2L2/NRF2. Methylglyoxal, a reactive metabolite that accumulates when the glycolytic enzyme PGK1 is inhibited, promotes formation of a methylimidazole cross-link between proximal Cys-151 and Arg-135 on another KEAP1 molecule, resulting in an inactive dimer that inactivates the BCR(KEAP1) complex. Degraded via a proteasomal-independent process during selective autophagy: interaction with phosphorylated SQSTM1/p62 sequesters KEAP1 in inclusion bodies, leading to its degradation. In terms of processing, auto-ubiquitinated by the BCR(KEAP1) complex. Quinone-induced oxidative stress, but not sulforaphane, increases its ubiquitination. Ubiquitination and subsequent degradation is most pronounced following prolonged exposure of cells to oxidative stress, particularly in glutathione-deficient cells that are highly susceptible to oxidative stress. Deubiquitinated by USP25; leading to stabilization. Ubiquitinated by TRIM25; leading to degradation upon ER stress. As to expression, broadly expressed, with highest levels in skeletal muscle.

The protein resides in the cytoplasm. It localises to the nucleus. Its pathway is protein modification; protein ubiquitination. With respect to regulation, ubiquitin ligase activity of the BCR(KEAP1) complex is inhibited by oxidative stress and electrophile metabolites such as sulforaphane. Electrophile metabolites react with reactive cysteine residues in KEAP1 and trigger non-enzymatic covalent modifications of these cysteine residues, leading to inactivate the ubiquitin ligase activity of the BCR(KEAP1) complex. Selective autophagy also inactivates the BCR(KEAP1) complex via interaction between KEAP1 and SQSTM1/p62, which sequesters the complex in inclusion bodies and promotes its degradation. In terms of biological role, substrate-specific adapter of a BCR (BTB-CUL3-RBX1) E3 ubiquitin ligase complex that regulates the response to oxidative stress by targeting NFE2L2/NRF2 for ubiquitination. KEAP1 acts as a key sensor of oxidative and electrophilic stress: in normal conditions, the BCR(KEAP1) complex mediates ubiquitination and degradation of NFE2L2/NRF2, a transcription factor regulating expression of many cytoprotective genes. In response to oxidative stress, different electrophile metabolites trigger non-enzymatic covalent modifications of highly reactive cysteine residues in KEAP1, leading to inactivate the ubiquitin ligase activity of the BCR(KEAP1) complex, promoting NFE2L2/NRF2 nuclear accumulation and expression of phase II detoxifying enzymes. In response to selective autophagy, KEAP1 is sequestered in inclusion bodies following its interaction with SQSTM1/p62, leading to inactivation of the BCR(KEAP1) complex and activation of NFE2L2/NRF2. The BCR(KEAP1) complex also mediates ubiquitination of SQSTM1/p62, increasing SQSTM1/p62 sequestering activity and degradation. The BCR(KEAP1) complex also targets BPTF and PGAM5 for ubiquitination and degradation by the proteasome. This is Kelch-like ECH-associated protein 1 from Homo sapiens (Human).